We begin with the raw amino-acid sequence, 213 residues long: MKFFIDTANLEEIKHAHELGILAGVTTNPSLVAKENVSFHDRLREITSIVSGSVSAEVISTDAAGMIAEGEELAKIAPNITIKVPMTPEGLKAVKAFSEKGIQTNVTLVFTANQALLAARAGATYVSPFLGRLDDIGHNGLELISTIAEIFNIHGIETEIIAASIRHPHHVTEAALRGAHIATVPYKVLMQLFNHPLTDQGIEKFLADWNRQK.

The active-site Schiff-base intermediate with substrate is K83.

The protein belongs to the transaldolase family. Type 3B subfamily.

The protein localises to the cytoplasm. The catalysed reaction is D-sedoheptulose 7-phosphate + D-glyceraldehyde 3-phosphate = D-erythrose 4-phosphate + beta-D-fructose 6-phosphate. It functions in the pathway carbohydrate degradation; pentose phosphate pathway; D-glyceraldehyde 3-phosphate and beta-D-fructose 6-phosphate from D-ribose 5-phosphate and D-xylulose 5-phosphate (non-oxidative stage): step 2/3. Transaldolase is important for the balance of metabolites in the pentose-phosphate pathway. This is Probable transaldolase from Geobacillus kaustophilus (strain HTA426).